Consider the following 894-residue polypeptide: CWF19-like protein 2 (894 aa).

A disordered region spans residues 1–147 (MATSMAAASG…DEKSGKDDTQ (147 aa)). Over residues 13-56 (ESAKSIEERKEQTRNARAEVLRQAKANFEKEERRKELKRLRGED) the composition is skewed to basic and acidic residues. A coiled-coil region spans residues 13 to 107 (ESAKSIEERK…KKQKYEKNNE (95 aa)). Position 75 is a phosphoserine (serine 75). Basic residues predominate over residues 76–99 (VKKKKKKDKHSKKAKKEKKKKSKK). Basic and acidic residues predominate over residues 128 to 147 (PDKEKAWKVKDEKSGKDDTQ). Residues 166–281 (SSSSLKAEKE…AEKAASTKED (116 aa)) adopt a coiled-coil conformation. Lysine 171 is covalently cross-linked (Glycyl lysine isopeptide (Lys-Gly) (interchain with G-Cter in SUMO2)). A compositionally biased stretch (basic and acidic residues) spans 270-284 (EDAEKAASTKEDYRR). The interval 270 to 483 (EDAEKAASTK…STFAGSPERE (214 aa)) is disordered. A compositionally biased stretch (polar residues) spans 320-330 (TTDTAKNSNNE). The span at 332–352 (FIGDEKDKRPGSLETCRRESN) shows a compositional bias: basic and acidic residues. A phosphoserine mark is found at serine 360 and serine 372. 2 stretches are compositionally biased toward basic and acidic residues: residues 410-430 (KNSE…DKKH) and 440-473 (TDEH…RDTK). 2 positions are modified to phosphoserine: serine 479 and serine 484. The stretch at 502–530 (KAEMMGNMELAEQLKVQLEKANKFKETIT) forms a coiled coil. Positions 561–583 (NTPGKSLESQGGRRKRQMVSTHE) are disordered. A Glycyl lysine isopeptide (Lys-Gly) (interchain with G-Cter in SUMO2) cross-link involves residue lysine 604. A coiled-coil region spans residues 644–675 (AAERERLGEEEENQRKKAIAEHRSLAAQMEKC).

Belongs to the CWF19 family.

This is CWF19-like protein 2 (CWF19L2) from Homo sapiens (Human).